We begin with the raw amino-acid sequence, 159 residues long: Transcription elongation factor GreA (159 aa).

A coiled-coil region spans residues 2 to 77 (EENKEFLLTQ…LENMVRKAVI (76 aa)).

This sequence belongs to the GreA/GreB family.

Necessary for efficient RNA polymerase transcription elongation past template-encoded arresting sites. The arresting sites in DNA have the property of trapping a certain fraction of elongating RNA polymerases that pass through, resulting in locked ternary complexes. Cleavage of the nascent transcript by cleavage factors such as GreA or GreB allows the resumption of elongation from the new 3'terminus. GreA releases sequences of 2 to 3 nucleotides. The polypeptide is Transcription elongation factor GreA (Clostridioides difficile (strain 630) (Peptoclostridium difficile)).